The primary structure comprises 532 residues: Cytochrome P450 99A2 (532 aa).

Residues 30 to 50 form a helical membrane-spanning segment; the sequence is SAATLTLVSLLTLPILLALLT. Cysteine 468 contacts heme. A helical membrane pass occupies residues 473–493; that stretch reads FGMVLLELIVARLLYYFDWSL.

It belongs to the cytochrome P450 family. Heme serves as cofactor.

The protein localises to the membrane. Its function is as follows. Involved in momilactone phytoalexins biosynthesis. Participates in the biosynthetic steps between 9-beta-pimara-7,15-diene and 3-beta-hydroxy-9-beta-pimara-7,15-dien-19,6-beta-olide. This is Cytochrome P450 99A2 (CYP99A2) from Oryza sativa subsp. japonica (Rice).